The primary structure comprises 216 residues: Minor capsid protein P6 (216 aa).

The hydrophobic stretch occupies residues 1 to 21 (MILVGIAVLILLAVFAILYYK).

In terms of assembly, interacts with the major capsid protein.

Its subcellular location is the virion. Functionally, one of the minor capsid proteins that constitute a network internal to the major capsid proteins and outside the lipid membrane. The minor capsid proteins glue and stabilize the capsomers. In Paramecium bursaria Chlorella virus 1 (PBCV-1), this protein is Minor capsid protein P6.